The chain runs to 410 residues: MKRAIILVLDSFGIGAAGDADKFGDVGSDTMGHIAEQCDKGLADNGNRKGPLTLPNLSKLGLAMAGKESTGKFSAGLDANAEIIGAYGHAAELSSGKDTPSGHWEIAGVPVLFDWGYFTDKENSFPKELTDRILERANLPGYLGNCHASGTQVLDDLGEEHMKTGMPIFYTSADSVFQIACHEETFGLDNLLTLCQIAREELEDYNIGRVIARPFIGPGKGQFERTGNRRDLSVEPPAATILQKLVDEKGGQVHSIGKISDIYAGCGITKKTKATGIPALFDATKEAIEQAIEQAGDNTIVFTNFVDFDSAYGHRRDVAGYAAALEYFDGRLPEIMDMLQEDDILILTADHGCDPTWPGTDHTREHIPVLVYGHKVPAGSLGRRDTFADIGQTLAEYFETSDMEYGKSFL.

6 residues coordinate Mn(2+): aspartate 10, aspartate 309, histidine 314, aspartate 350, histidine 351, and histidine 362.

The protein belongs to the phosphopentomutase family. The cofactor is Mn(2+).

The protein localises to the cytoplasm. The enzyme catalyses 2-deoxy-alpha-D-ribose 1-phosphate = 2-deoxy-D-ribose 5-phosphate. It carries out the reaction alpha-D-ribose 1-phosphate = D-ribose 5-phosphate. It participates in carbohydrate degradation; 2-deoxy-D-ribose 1-phosphate degradation; D-glyceraldehyde 3-phosphate and acetaldehyde from 2-deoxy-alpha-D-ribose 1-phosphate: step 1/2. Its function is as follows. Isomerase that catalyzes the conversion of deoxy-ribose 1-phosphate (dRib-1-P) and ribose 1-phosphate (Rib-1-P) to deoxy-ribose 5-phosphate (dRib-5-P) and ribose 5-phosphate (Rib-5-P), respectively. The polypeptide is Phosphopentomutase (Aliivibrio fischeri (strain ATCC 700601 / ES114) (Vibrio fischeri)).